We begin with the raw amino-acid sequence, 338 residues long: Dihydroorotate dehydrogenase (quinone) (338 aa).

FMN contacts are provided by residues 68-72 and Thr-92; that span reads AGMDK. Lys-72 is a substrate binding site. 117 to 121 contributes to the substrate binding site; sequence NRMGF. Residues Ser-147 and Asn-180 each coordinate FMN. Asn-180 is a substrate binding site. The active-site Nucleophile is Ser-183. Asn-185 is a substrate binding site. Residues Lys-214 and Thr-242 each coordinate FMN. 243–244 contributes to the substrate binding site; the sequence is NT. Residues Gly-267, Gly-296, and 317–318 each bind FMN; that span reads YT.

Belongs to the dihydroorotate dehydrogenase family. Type 2 subfamily. In terms of assembly, monomer. The cofactor is FMN.

The protein resides in the cell membrane. The enzyme catalyses (S)-dihydroorotate + a quinone = orotate + a quinol. It functions in the pathway pyrimidine metabolism; UMP biosynthesis via de novo pathway; orotate from (S)-dihydroorotate (quinone route): step 1/1. Its function is as follows. Catalyzes the conversion of dihydroorotate to orotate with quinone as electron acceptor. The polypeptide is Dihydroorotate dehydrogenase (quinone) (Salinispora arenicola (strain CNS-205)).